The sequence spans 400 residues: Deoxyhypusine synthase-like protein (400 aa).

The tract at residues 372–400 (KLGKEQMPEPQSTEPVATYPCGTPIKGRK) is disordered.

This sequence belongs to the deoxyhypusine synthase family.

This Cyanothece sp. (strain PCC 7425 / ATCC 29141) protein is Deoxyhypusine synthase-like protein.